We begin with the raw amino-acid sequence, 132 residues long: Protein NrdI (132 aa).

The protein belongs to the NrdI family.

Functionally, probably involved in ribonucleotide reductase function. This is Protein NrdI from Agrobacterium fabrum (strain C58 / ATCC 33970) (Agrobacterium tumefaciens (strain C58)).